Here is a 314-residue protein sequence, read N- to C-terminus: Small ribosomal subunit biogenesis GTPase RsgA (314 aa).

The disordered stretch occupies residues M1–Q21. Residues S85–F246 enclose the CP-type G domain. GTP contacts are provided by residues N134–D137 and G188–T196. Positions 270, 275, 277, and 283 each coordinate Zn(2+).

It belongs to the TRAFAC class YlqF/YawG GTPase family. RsgA subfamily. As to quaternary structure, monomer. Associates with 30S ribosomal subunit, binds 16S rRNA. Requires Zn(2+) as cofactor.

Its subcellular location is the cytoplasm. In terms of biological role, one of several proteins that assist in the late maturation steps of the functional core of the 30S ribosomal subunit. Helps release RbfA from mature subunits. May play a role in the assembly of ribosomal proteins into the subunit. Circularly permuted GTPase that catalyzes slow GTP hydrolysis, GTPase activity is stimulated by the 30S ribosomal subunit. This is Small ribosomal subunit biogenesis GTPase RsgA from Burkholderia mallei (strain ATCC 23344).